The chain runs to 101 residues: Small ribosomal subunit protein uS14 (101 aa).

The protein belongs to the universal ribosomal protein uS14 family. Part of the 30S ribosomal subunit. Contacts proteins S3 and S10.

Its function is as follows. Binds 16S rRNA, required for the assembly of 30S particles and may also be responsible for determining the conformation of the 16S rRNA at the A site. This chain is Small ribosomal subunit protein uS14, found in Pseudomonas putida (strain W619).